We begin with the raw amino-acid sequence, 67 residues long: MQPVESSAIEAAGYDPAEQILALRFTGGATYLYYEVPPEVFDDLLAAESTGRFVNGIVKPRFRAVAL.

In Tsukamurella paurometabola (strain ATCC 8368 / DSM 20162 / CCUG 35730 / CIP 100753 / JCM 10117 / KCTC 9821 / NBRC 16120 / NCIMB 702349 / NCTC 13040) (Corynebacterium paurometabolum), this protein is Protein Tpau_2998.